Consider the following 246-residue polypeptide: Probable 2-phosphosulfolactate phosphatase (246 aa).

The protein belongs to the ComB family. The cofactor is Mg(2+).

The catalysed reaction is (2R)-O-phospho-3-sulfolactate + H2O = (2R)-3-sulfolactate + phosphate. This chain is Probable 2-phosphosulfolactate phosphatase, found in Nostoc punctiforme (strain ATCC 29133 / PCC 73102).